Consider the following 248-residue polypeptide: Small ribosomal subunit protein uS3 (248 aa).

In terms of domain architecture, KH type-2 spans 38-106 (IREFLSKGLD…QVALNILEVK (69 aa)). Residues 214-230 (SEINAPAERRGRGDRNA) show a composition bias toward basic and acidic residues. The interval 214-248 (SEINAPAERRGRGDRNARPRRGGQRRQRAEQKQEG) is disordered.

Belongs to the universal ribosomal protein uS3 family. In terms of assembly, part of the 30S ribosomal subunit. Forms a tight complex with proteins S10 and S14.

In terms of biological role, binds the lower part of the 30S subunit head. Binds mRNA in the 70S ribosome, positioning it for translation. This is Small ribosomal subunit protein uS3 from Corynebacterium glutamicum (strain R).